Consider the following 373-residue polypeptide: Queuine tRNA-ribosyltransferase (373 aa).

Asp90 acts as the Proton acceptor in catalysis. Substrate-binding positions include 90–94, Asp144, Gln193, and Gly220; that span reads DSGGF. Residues 251 to 257 form an RNA binding region; the sequence is GVGTPED. Asp270 acts as the Nucleophile in catalysis. Residues 275-279 are RNA binding; important for wobble base 34 recognition; it reads TRNAR. Cys308, Cys310, Cys313, and His339 together coordinate Zn(2+).

This sequence belongs to the queuine tRNA-ribosyltransferase family. In terms of assembly, homodimer. Within each dimer, one monomer is responsible for RNA recognition and catalysis, while the other monomer binds to the replacement base PreQ1. It depends on Zn(2+) as a cofactor.

The catalysed reaction is 7-aminomethyl-7-carbaguanine + guanosine(34) in tRNA = 7-aminomethyl-7-carbaguanosine(34) in tRNA + guanine. Its pathway is tRNA modification; tRNA-queuosine biosynthesis. In terms of biological role, catalyzes the base-exchange of a guanine (G) residue with the queuine precursor 7-aminomethyl-7-deazaguanine (PreQ1) at position 34 (anticodon wobble position) in tRNAs with GU(N) anticodons (tRNA-Asp, -Asn, -His and -Tyr). Catalysis occurs through a double-displacement mechanism. The nucleophile active site attacks the C1' of nucleotide 34 to detach the guanine base from the RNA, forming a covalent enzyme-RNA intermediate. The proton acceptor active site deprotonates the incoming PreQ1, allowing a nucleophilic attack on the C1' of the ribose to form the product. After dissociation, two additional enzymatic reactions on the tRNA convert PreQ1 to queuine (Q), resulting in the hypermodified nucleoside queuosine (7-(((4,5-cis-dihydroxy-2-cyclopenten-1-yl)amino)methyl)-7-deazaguanosine). This chain is Queuine tRNA-ribosyltransferase, found in Campylobacter jejuni (strain RM1221).